Consider the following 56-residue polypeptide: Conotoxin Bu12 (56 aa).

The first 2 residues, 1 to 2, serve as a signal peptide directing secretion; sequence TA. A propeptide spanning residues 3–25 is cleaved from the precursor; it reads EDSRGTQLHRALRKATKLPVSTR. 3 disulfide bridges follow: Cys26–Cys40, Cys33–Cys44, and Cys39–Cys49.

Belongs to the conotoxin O1 superfamily. Expressed by the venom duct.

It localises to the secreted. The protein is Conotoxin Bu12 of Conus bullatus (Bubble cone).